Reading from the N-terminus, the 113-residue chain is Hydrogenase maturation factor HybF (113 aa).

Ni(2+) is bound by residues His2 and Glu3. Residues Cys73, Cys76, Cys89, and Cys92 each contribute to the Zn(2+) site.

The protein belongs to the HypA/HybF family. HybF subfamily.

In terms of biological role, involved in the maturation of [NiFe] hydrogenases. Required for nickel insertion into the metal center of the hydrogenase. This chain is Hydrogenase maturation factor HybF, found in Salmonella typhi.